Here is a 717-residue protein sequence, read N- to C-terminus: Fatty acid oxidation complex subunit alpha (717 aa).

The interval 1–189 (MIYQSPTIEV…KVGAIDAVVA (189 aa)) is enoyl-CoA hydratase/isomerase. Aspartate 296 contributes to the substrate binding site. Residues 311-717 (KKVNSAAVLG…ANNGSYYQQA (407 aa)) form a 3-hydroxyacyl-CoA dehydrogenase region. NAD(+) is bound by residues methionine 324, aspartate 343, 400–402 (VVE), lysine 407, and serine 429. Histidine 450 functions as the For 3-hydroxyacyl-CoA dehydrogenase activity in the catalytic mechanism. Asparagine 453 contributes to the NAD(+) binding site. Asparagine 500 and tyrosine 660 together coordinate substrate.

This sequence in the N-terminal section; belongs to the enoyl-CoA hydratase/isomerase family. In the C-terminal section; belongs to the 3-hydroxyacyl-CoA dehydrogenase family. Heterotetramer of two alpha chains (FadB) and two beta chains (FadA).

The enzyme catalyses a (3S)-3-hydroxyacyl-CoA + NAD(+) = a 3-oxoacyl-CoA + NADH + H(+). The catalysed reaction is a (3S)-3-hydroxyacyl-CoA = a (2E)-enoyl-CoA + H2O. It catalyses the reaction a 4-saturated-(3S)-3-hydroxyacyl-CoA = a (3E)-enoyl-CoA + H2O. It carries out the reaction (3S)-3-hydroxybutanoyl-CoA = (3R)-3-hydroxybutanoyl-CoA. The enzyme catalyses a (3Z)-enoyl-CoA = a 4-saturated (2E)-enoyl-CoA. The catalysed reaction is a (3E)-enoyl-CoA = a 4-saturated (2E)-enoyl-CoA. The protein operates within lipid metabolism; fatty acid beta-oxidation. In terms of biological role, involved in the aerobic and anaerobic degradation of long-chain fatty acids via beta-oxidation cycle. Catalyzes the formation of 3-oxoacyl-CoA from enoyl-CoA via L-3-hydroxyacyl-CoA. It can also use D-3-hydroxyacyl-CoA and cis-3-enoyl-CoA as substrate. The chain is Fatty acid oxidation complex subunit alpha from Shewanella pealeana (strain ATCC 700345 / ANG-SQ1).